A 312-amino-acid polypeptide reads, in one-letter code: Putative clathrin assembly protein At2g01920 (312 aa).

Residues 21–152 enclose the ENTH domain; sequence LITATDEKFT…ILYYNKNMIR (132 aa).

The protein localises to the membrane. The protein resides in the clathrin-coated pit. It is found in the golgi apparatus. Its subcellular location is the cytoplasmic vesicle. It localises to the clathrin-coated vesicle. This chain is Putative clathrin assembly protein At2g01920, found in Arabidopsis thaliana (Mouse-ear cress).